The chain runs to 185 residues: NADH-quinone oxidoreductase subunit B (185 aa).

Residues C64, C65, C129, and C159 each contribute to the [4Fe-4S] cluster site.

It belongs to the complex I 20 kDa subunit family. NDH-1 is composed of 14 different subunits. Subunits NuoB, C, D, E, F, and G constitute the peripheral sector of the complex. Requires [4Fe-4S] cluster as cofactor.

Its subcellular location is the cell inner membrane. The enzyme catalyses a quinone + NADH + 5 H(+)(in) = a quinol + NAD(+) + 4 H(+)(out). NDH-1 shuttles electrons from NADH, via FMN and iron-sulfur (Fe-S) centers, to quinones in the respiratory chain. Couples the redox reaction to proton translocation (for every two electrons transferred, four hydrogen ions are translocated across the cytoplasmic membrane), and thus conserves the redox energy in a proton gradient. This chain is NADH-quinone oxidoreductase subunit B, found in Rhodospirillum rubrum (strain ATCC 11170 / ATH 1.1.1 / DSM 467 / LMG 4362 / NCIMB 8255 / S1).